The chain runs to 101 residues: Small ribosomal subunit protein uS14 (101 aa).

It belongs to the universal ribosomal protein uS14 family. In terms of assembly, part of the 30S ribosomal subunit. Contacts proteins S3 and S10.

In terms of biological role, binds 16S rRNA, required for the assembly of 30S particles and may also be responsible for determining the conformation of the 16S rRNA at the A site. The chain is Small ribosomal subunit protein uS14 from Beijerinckia indica subsp. indica (strain ATCC 9039 / DSM 1715 / NCIMB 8712).